The sequence spans 354 residues: Glyceraldehyde-3-phosphate dehydrogenase (354 aa).

NAD(+)-binding positions include T11 to I12 and G108. Position 137 to 139 (S137 to N139) interacts with D-glyceraldehyde 3-phosphate. C138 functions as the Nucleophile in the catalytic mechanism. R166 contributes to the NAD(+) binding site. H192–G193 contributes to the D-glyceraldehyde 3-phosphate binding site. Q299 contacts NAD(+).

The protein belongs to the glyceraldehyde-3-phosphate dehydrogenase family. In terms of assembly, homotetramer.

The protein localises to the cytoplasm. The enzyme catalyses D-glyceraldehyde 3-phosphate + phosphate + NADP(+) = (2R)-3-phospho-glyceroyl phosphate + NADPH + H(+). It carries out the reaction D-glyceraldehyde 3-phosphate + phosphate + NAD(+) = (2R)-3-phospho-glyceroyl phosphate + NADH + H(+). It participates in carbohydrate degradation; glycolysis; pyruvate from D-glyceraldehyde 3-phosphate: step 1/5. This chain is Glyceraldehyde-3-phosphate dehydrogenase, found in Haloarcula marismortui (strain ATCC 43049 / DSM 3752 / JCM 8966 / VKM B-1809) (Halobacterium marismortui).